Here is a 415-residue protein sequence, read N- to C-terminus: ATP-dependent RNA helicase RhlB (415 aa).

A Q motif motif is present at residues 9 to 37 (QRFSALPLHPIVRGALAKKGFDFCTPIQA). The region spanning 40-218 (LPISLNGRDV…FEDMNEPEYI (179 aa)) is the Helicase ATP-binding domain. Position 53–60 (53–60 (AQTGTGKT)) interacts with ATP. The DEAD box signature appears at 164 to 167 (DEAD). A Helicase C-terminal domain is found at 241–389 (DKMALLLTLM…VSQYETEALL (149 aa)).

Belongs to the DEAD box helicase family. RhlB subfamily. As to quaternary structure, component of the RNA degradosome, which is a multiprotein complex involved in RNA processing and mRNA degradation.

It localises to the cytoplasm. The catalysed reaction is ATP + H2O = ADP + phosphate + H(+). In terms of biological role, DEAD-box RNA helicase involved in RNA degradation. Has RNA-dependent ATPase activity and unwinds double-stranded RNA. This Haemophilus influenzae (strain ATCC 51907 / DSM 11121 / KW20 / Rd) protein is ATP-dependent RNA helicase RhlB.